A 205-amino-acid chain; its full sequence is Ribonuclease HII (205 aa).

The RNase H type-2 domain maps to 14 to 201 (EIIAGVDEAG…KGNINHSAIL (188 aa)). A divalent metal cation is bound by residues Asp-20, Glu-21, and Asp-111.

The protein belongs to the RNase HII family. Requires Mn(2+) as cofactor. It depends on Mg(2+) as a cofactor.

Its subcellular location is the cytoplasm. It carries out the reaction Endonucleolytic cleavage to 5'-phosphomonoester.. In terms of biological role, endonuclease that specifically degrades the RNA of RNA-DNA hybrids. In Orientia tsutsugamushi (strain Ikeda) (Rickettsia tsutsugamushi), this protein is Ribonuclease HII.